The chain runs to 275 residues: Large ribosomal subunit protein uL2c (275 aa).

Residues 225-252 (MNPCDHPHGGGEGRSPIGRAKPVTPWGK) form a disordered region.

The protein belongs to the universal ribosomal protein uL2 family. As to quaternary structure, part of the 50S ribosomal subunit.

Its subcellular location is the plastid. It localises to the chloroplast. This chain is Large ribosomal subunit protein uL2c (rpl2), found in Guillardia theta (Cryptophyte).